The following is a 733-amino-acid chain: MIVIFIFILIAVGLLSTKILHRYISIKKIPWYVYISVWIGWFMCFSIVILVPIDILCTDYRQCKHISDSQSEKLNEIITNISNGTNSGSNNNNNNNNEIINKYDSCEEPWAYISNDKLEYIYQTFYFGTLLLTWLVYPLMGSFVLAGDFHLSGRITRSIKENAYLYLIFGVIGLVVMIWLLAVKQLDWNSMVGFAMAAANTWGLCLVIILMGYGLVETPRSIWVSSQRSLVLKHLQFKAVELLNSKKKANEELIATMKVIRRIQEKTKKYDPYEKYIKIIVDQCPPEQYALVQRGEGDGEATYSVLVALNSRLKNAITNSQRAEFLYDQCLVEAFELQDIQNSAISLDKNVNWSFREQRQGRFAKKLDIMEWIWYNYLEISVFRVAAIVFAVLSLLIIWSEFALAFTSFDISVLSNIVKHSNVSNIFVQFILFFPLGYEALTCYSTLFKIRIFNYYRLIPHQHSDSNSIIFSAAYLCRLGAPLCYNFIQFINMNSGIEDNRTSFSVVMGTMNVAPFLGTYFYIYFPLLIVIVCLSTLFNVYSRIMNCLNISKFRFDVDFSHEQIDEGKFLIDSERRKWTQNNIKPLSSKSPPPSLDSTSNNPKQIFKSGSTTISKQSPPNLNVSGGNINNNNTNNGNTSSARSFIDSFLKKSSNNNNNNNNNNNPYEQTLLFDESNDFDDDDDIESGGAGRPTYNAHLSSSFNGGANSTSISGYPQINKMFGGANRYSQLPKK.

A run of 5 helical transmembrane segments spans residues 1–21 (MIVI…KILH), 33–53 (VYIS…LVPI), 125–145 (FYFG…SFVL), 163–183 (AYLY…LLAV), and 191–211 (MVGF…IILM). A coiled-coil region spans residues 232–266 (LKHLQFKAVELLNSKKKANEELIATMKVIRRIQEK). 4 consecutive transmembrane segments (helical) span residues 386-406 (AAIV…ALAF), 423-443 (VSNI…ALTC), 468-488 (SIIF…YNFI), and 513-533 (VAPF…VIVC). 3 disordered regions span residues 581 to 641 (NNIK…TSSA), 649 to 668 (LKKS…PYEQ), and 674 to 696 (ESND…TYNA). A compositionally biased stretch (polar residues) spans 596 to 619 (DSTSNNPKQIFKSGSTTISKQSPP). Low complexity-rich tracts occupy residues 620–640 (NLNV…NTSS) and 654–664 (NNNNNNNNNNN). A compositionally biased stretch (acidic residues) spans 674–685 (ESNDFDDDDDIE).

It belongs to the LIMR family.

The protein resides in the membrane. The protein is LMBR1 domain-containing protein 2 homolog A of Dictyostelium discoideum (Social amoeba).